Reading from the N-terminus, the 154-residue chain is 6,7-dimethyl-8-ribityllumazine synthase (154 aa).

Residues Trp22, 56 to 58 (AWE), and 80 to 82 (CVI) contribute to the 5-amino-6-(D-ribitylamino)uracil site. 85–86 (DT) is a (2S)-2-hydroxy-3-oxobutyl phosphate binding site. His88 acts as the Proton donor in catalysis. Residue Asn113 coordinates 5-amino-6-(D-ribitylamino)uracil. Arg127 contributes to the (2S)-2-hydroxy-3-oxobutyl phosphate binding site.

This sequence belongs to the DMRL synthase family. In terms of assembly, forms an icosahedral capsid composed of 60 subunits, arranged as a dodecamer of pentamers.

It catalyses the reaction (2S)-2-hydroxy-3-oxobutyl phosphate + 5-amino-6-(D-ribitylamino)uracil = 6,7-dimethyl-8-(1-D-ribityl)lumazine + phosphate + 2 H2O + H(+). It participates in cofactor biosynthesis; riboflavin biosynthesis; riboflavin from 2-hydroxy-3-oxobutyl phosphate and 5-amino-6-(D-ribitylamino)uracil: step 1/2. Functionally, catalyzes the formation of 6,7-dimethyl-8-ribityllumazine by condensation of 5-amino-6-(D-ribitylamino)uracil with 3,4-dihydroxy-2-butanone 4-phosphate. This is the penultimate step in the biosynthesis of riboflavin. This chain is 6,7-dimethyl-8-ribityllumazine synthase, found in Xanthomonas axonopodis pv. citri (strain 306).